The following is a 352-amino-acid chain: MSSKKKTKPVLPPGPVMVDVAGTTLTKDEKRRLRNPLVGGVILFARNFTDRRQLCALTRAIHKARKEPLLIAVDHEGGRVQRFRDDGFTALPPMQELGKLWDRDPLAAMRLATEAGYVLAAELRACGVDLSFTPVLDLDYGVSKVIGNRAFHHDARVVTMLSRALTQGLALAGMAACGKHFPGHGFVGADSHHEIPVDPRPLARILKDDAAPYAWLGDLVMPAVMPAHVIYPKVDAQPAGFSRRWVSEILRERLGYDGVVFSDDLTMEGASVAGDILARAEAALGAGCDMVLVCRPDLADELLDRLQVQHPAASVERIRRLLPRFAAPDWDTLQNDSRYQHARRLQSQIVSG.

Substrate is bound by residues D74, R82, R149, and 179–180 (KH). H192 functions as the Proton donor/acceptor in the catalytic mechanism. D263 functions as the Nucleophile in the catalytic mechanism.

Belongs to the glycosyl hydrolase 3 family. NagZ subfamily.

It is found in the cytoplasm. The catalysed reaction is Hydrolysis of terminal non-reducing N-acetyl-D-hexosamine residues in N-acetyl-beta-D-hexosaminides.. The protein operates within cell wall biogenesis; peptidoglycan recycling. Its function is as follows. Plays a role in peptidoglycan recycling by cleaving the terminal beta-1,4-linked N-acetylglucosamine (GlcNAc) from peptide-linked peptidoglycan fragments, giving rise to free GlcNAc, anhydro-N-acetylmuramic acid and anhydro-N-acetylmuramic acid-linked peptides. The chain is Beta-hexosaminidase from Bordetella pertussis (strain Tohama I / ATCC BAA-589 / NCTC 13251).